The following is a 696-amino-acid chain: Zinc finger SWIM domain-containing protein 3 (696 aa).

The SWIM-type zinc finger occupies 531-572; it reads VDVQLLEDSHQVSKDGCSCSCSFQQWYHLPCRHILALLHTSQ.

The protein is Zinc finger SWIM domain-containing protein 3 (ZSWIM3) of Homo sapiens (Human).